Consider the following 262-residue polypeptide: Phosphonates import ATP-binding protein PhnC (262 aa).

Residues I5–N253 form the ABC transporter domain. Position 37–44 (G37–S44) interacts with ATP.

Belongs to the ABC transporter superfamily. Phosphonates importer (TC 3.A.1.9.1) family. In terms of assembly, the complex is composed of two ATP-binding proteins (PhnC), two transmembrane proteins (PhnE) and a solute-binding protein (PhnD).

It is found in the cell inner membrane. It carries out the reaction phosphonate(out) + ATP + H2O = phosphonate(in) + ADP + phosphate + H(+). Part of the ABC transporter complex PhnCDE involved in phosphonates import. Responsible for energy coupling to the transport system. This is Phosphonates import ATP-binding protein PhnC from Shigella flexneri serotype 5b (strain 8401).